Reading from the N-terminus, the 261-residue chain is NAD(P)H-quinone oxidoreductase subunit K, chloroplastic (261 aa).

C64, C65, C129, and C160 together coordinate [4Fe-4S] cluster.

It belongs to the complex I 20 kDa subunit family. As to quaternary structure, NDH is composed of at least 16 different subunits, 5 of which are encoded in the nucleus. The cofactor is [4Fe-4S] cluster.

The protein localises to the plastid. It is found in the chloroplast thylakoid membrane. The catalysed reaction is a plastoquinone + NADH + (n+1) H(+)(in) = a plastoquinol + NAD(+) + n H(+)(out). It carries out the reaction a plastoquinone + NADPH + (n+1) H(+)(in) = a plastoquinol + NADP(+) + n H(+)(out). Functionally, NDH shuttles electrons from NAD(P)H:plastoquinone, via FMN and iron-sulfur (Fe-S) centers, to quinones in the photosynthetic chain and possibly in a chloroplast respiratory chain. The immediate electron acceptor for the enzyme in this species is believed to be plastoquinone. Couples the redox reaction to proton translocation, and thus conserves the redox energy in a proton gradient. This Physcomitrium patens (Spreading-leaved earth moss) protein is NAD(P)H-quinone oxidoreductase subunit K, chloroplastic.